We begin with the raw amino-acid sequence, 307 residues long: Methionyl-tRNA formyltransferase (307 aa).

108 to 111 (SLLP) contacts (6S)-5,6,7,8-tetrahydrofolate.

This sequence belongs to the Fmt family.

The enzyme catalyses L-methionyl-tRNA(fMet) + (6R)-10-formyltetrahydrofolate = N-formyl-L-methionyl-tRNA(fMet) + (6S)-5,6,7,8-tetrahydrofolate + H(+). Attaches a formyl group to the free amino group of methionyl-tRNA(fMet). The formyl group appears to play a dual role in the initiator identity of N-formylmethionyl-tRNA by promoting its recognition by IF2 and preventing the misappropriation of this tRNA by the elongation apparatus. The chain is Methionyl-tRNA formyltransferase from Stenotrophomonas maltophilia (strain R551-3).